We begin with the raw amino-acid sequence, 308 residues long: Transaldolase (308 aa).

Lysine 125 functions as the Schiff-base intermediate with substrate in the catalytic mechanism.

The protein belongs to the transaldolase family. Type 1 subfamily. Homodimer.

The protein localises to the cytoplasm. The enzyme catalyses D-sedoheptulose 7-phosphate + D-glyceraldehyde 3-phosphate = D-erythrose 4-phosphate + beta-D-fructose 6-phosphate. Its pathway is carbohydrate degradation; pentose phosphate pathway; D-glyceraldehyde 3-phosphate and beta-D-fructose 6-phosphate from D-ribose 5-phosphate and D-xylulose 5-phosphate (non-oxidative stage): step 2/3. Functionally, transaldolase is important for the balance of metabolites in the pentose-phosphate pathway. The sequence is that of Transaldolase from Stutzerimonas stutzeri (strain A1501) (Pseudomonas stutzeri).